Consider the following 121-residue polypeptide: UPF0295 protein BH0952 (121 aa).

A run of 2 helical transmembrane segments spans residues 12–32 (IRTFALSLVFLGILVMYIGIF) and 41–61 (VLAMILGFLCIIASTAVYFWI).

The protein belongs to the UPF0295 family.

It localises to the cell membrane. This is UPF0295 protein BH0952 from Halalkalibacterium halodurans (strain ATCC BAA-125 / DSM 18197 / FERM 7344 / JCM 9153 / C-125) (Bacillus halodurans).